A 215-amino-acid chain; its full sequence is uncharacterized protein (215 aa).

The protein belongs to the HAD-like hydrolase superfamily. CbbY/CbbZ/Gph/YieH family.

This is an uncharacterized protein from Lacticaseibacillus casei (Lactobacillus casei).